The primary structure comprises 214 residues: Ras-related protein Rab-17 (214 aa).

Phosphoserine is present on Ser-29. Residues Gly-31, Lys-32, Thr-33, and Thr-50 each contribute to the GTP site. Mg(2+) contacts are provided by Thr-33, Thr-50, and Asp-73. Residues 43 to 54 (DFSNVLPTVGCA) carry the Switch 1 motif. The Switch 2 signature appears at 75–91 (AGQEKYQSVCHLYFRGA). Residues Gly-76, Asn-132, Lys-133, Asp-135, and Ala-163 each contribute to the GTP site. The disordered stretch occupies residues 183–204 (RAGDTGSSRPQEGEAVALNQEP). Residues Cys-211 and Cys-212 are each lipidated (S-geranylgeranyl cysteine).

This sequence belongs to the small GTPase superfamily. Rab family. Requires Mg(2+) as cofactor. As to expression, expressed in kidney, liver, and intestine mainly by epithelial cells. Expressed in hippocampus (at protein level).

It is found in the recycling endosome membrane. The protein localises to the melanosome. It localises to the cell projection. Its subcellular location is the dendrite. It carries out the reaction GTP + H2O = GDP + phosphate + H(+). Its activity is regulated as follows. Regulated by guanine nucleotide exchange factors (GEFs) which promote the exchange of bound GDP for free GTP. Regulated by GTPase activating proteins (GAPs) which increase the GTP hydrolysis activity. Inhibited by GDP dissociation inhibitors (GDIs). The small GTPases Rab are key regulators of intracellular membrane trafficking, from the formation of transport vesicles to their fusion with membranes. Rabs cycle between an inactive GDP-bound form and an active GTP-bound form that is able to recruit to membranes different set of downstream effectors directly responsible for vesicle formation, movement, tethering and fusion. RAB17 is involved in transcytosis, the directed movement of endocytosed material through the cell and its exocytosis from the plasma membrane at the opposite side. Mainly observed in epithelial cells, transcytosis mediates, for instance, the transcellular transport of immunoglobulins from the basolateral surface to the apical surface. Most probably controls membrane trafficking through apical recycling endosomes in a post-endocytic step of transcytosis. Required for melanosome transport and release from melanocytes, it also regulates dendrite and dendritic spine development. May also play a role in cell migration. The chain is Ras-related protein Rab-17 from Mus musculus (Mouse).